Reading from the N-terminus, the 884-residue chain is Translation initiation factor IF-2 (884 aa).

The segment at 58 to 248 (PEKVEQKRVR…GKTESVETEE (191 aa)) is disordered. Positions 66–77 (VRSNVIRKRRQP) are enriched in basic residues. Positions 87–106 (EAPAAQAPEAEEVTAPTAEE) are enriched in low complexity. Basic residues predominate over residues 172–183 (SRKKAKAKKHQA). A compositionally biased stretch (low complexity) spans 207 to 223 (DTAPADSPAAPAAATPA). The segment covering 229–239 (KPSRKDRKKRG) has biased composition (basic residues). Residues 384-553 (KRAPVVTIMG…LLQAEMLELK (170 aa)) enclose the tr-type G domain. A G1 region spans residues 393-400 (GHVDHGKT). 393 to 400 (GHVDHGKT) provides a ligand contact to GTP. Positions 418–422 (GITQH) are G2. Residues 439 to 442 (DTPG) are G3. Residues 439–443 (DTPGH) and 493–496 (NKID) each bind GTP. Residues 493–496 (NKID) form a G4 region. The tract at residues 529–531 (SAK) is G5.

This sequence belongs to the TRAFAC class translation factor GTPase superfamily. Classic translation factor GTPase family. IF-2 subfamily.

Its subcellular location is the cytoplasm. Its function is as follows. One of the essential components for the initiation of protein synthesis. Protects formylmethionyl-tRNA from spontaneous hydrolysis and promotes its binding to the 30S ribosomal subunits. Also involved in the hydrolysis of GTP during the formation of the 70S ribosomal complex. The protein is Translation initiation factor IF-2 of Desulfosudis oleivorans (strain DSM 6200 / JCM 39069 / Hxd3) (Desulfococcus oleovorans).